A 458-amino-acid chain; its full sequence is UDP-N-acetylglucosamine 1-carboxyvinyltransferase (458 aa).

Lys34 to Asn35 serves as a coordination point for phosphoenolpyruvate. Arg104 serves as a coordination point for UDP-N-acetyl-alpha-D-glucosamine. The Proton donor role is filled by Cys128. At Cys128 the chain carries 2-(S-cysteinyl)pyruvic acid O-phosphothioketal. 2 residues coordinate UDP-N-acetyl-alpha-D-glucosamine: Asp319 and Ile341.

Belongs to the EPSP synthase family. MurA subfamily.

The protein localises to the cytoplasm. It catalyses the reaction phosphoenolpyruvate + UDP-N-acetyl-alpha-D-glucosamine = UDP-N-acetyl-3-O-(1-carboxyvinyl)-alpha-D-glucosamine + phosphate. The protein operates within cell wall biogenesis; peptidoglycan biosynthesis. Functionally, cell wall formation. Adds enolpyruvyl to UDP-N-acetylglucosamine. This is UDP-N-acetylglucosamine 1-carboxyvinyltransferase from Prochlorococcus marinus (strain MIT 9515).